Consider the following 187-residue polypeptide: Peptidyl-tRNA hydrolase (187 aa).

Residue tyrosine 14 participates in tRNA binding. Histidine 19 serves as the catalytic Proton acceptor. TRNA contacts are provided by tyrosine 63 and asparagine 65.

The protein belongs to the PTH family. Monomer.

The protein localises to the cytoplasm. It carries out the reaction an N-acyl-L-alpha-aminoacyl-tRNA + H2O = an N-acyl-L-amino acid + a tRNA + H(+). Its function is as follows. Hydrolyzes ribosome-free peptidyl-tRNAs (with 1 or more amino acids incorporated), which drop off the ribosome during protein synthesis, or as a result of ribosome stalling. Functionally, catalyzes the release of premature peptidyl moieties from peptidyl-tRNA molecules trapped in stalled 50S ribosomal subunits, and thus maintains levels of free tRNAs and 50S ribosomes. The chain is Peptidyl-tRNA hydrolase from Thermodesulfovibrio yellowstonii (strain ATCC 51303 / DSM 11347 / YP87).